We begin with the raw amino-acid sequence, 612 residues long: MSKRVLTSVAWPYANGPRHIGHVAGFGVPSDVFARYQRMAGNEVLMVSGTDEHGTPLLVQAEKEGTTVQELADRYNRIIVEDLAGLGLSYDLFTRTTTRNHYAVVQELFTGLYNNGYMVTQTTRGAISPSTGRTLPDRYIEGTCPICGAKDARGDQCDNCGNQLDPEDLIDPRSKINGETPEFIDTEHFMLDLPALAEALTTWLKGRTDWRPNVLKFSLNLLEDIRPRAMSRDIDWGVPIPVEGWQDNNAKKLYVWFDAVVGYLSASIEWAWRIGDPDAWRKWWNDPEALSYYFMGKDNITFHSQIWPAELLGYGGQGSKGGEAGDLADPALNLPTEVVSSEFLTMSGSKFSSSKGVVIYVRDFLKEFGPDALRYFIATAGPETTDTDFTWDEFVRRINSELANEWGNLVNRTVSMAYKNFGEVPTPGPLTAEDEALLAESAKAFDVVGDNINLSRFKAGITEAMRIAGRANQYIAAMEPWKLAKDENQRERLATVLYTALQVVSDVNTLLTPYLPFSAQKIFETLGGEGIWAAQPEVVEVTDESPREPVGVGLPEEGRTYPVIMGDYTKQKVTWARQEIQPGTQLSKPKPLFPKLDPELAETGPEWAPVQK.

The short motif at 12-22 (PYANGPRHIGH) is the 'HIGH' region element. Zn(2+) is bound by residues C144, C147, C157, and C160. The 'KMSKS' region signature appears at 350–354 (KFSSS). S353 provides a ligand contact to ATP. Residues 580-612 (IQPGTQLSKPKPLFPKLDPELAETGPEWAPVQK) form a disordered region.

It belongs to the class-I aminoacyl-tRNA synthetase family. MetG type 1 subfamily. Monomer. Requires Zn(2+) as cofactor.

The protein resides in the cytoplasm. It carries out the reaction tRNA(Met) + L-methionine + ATP = L-methionyl-tRNA(Met) + AMP + diphosphate. In terms of biological role, is required not only for elongation of protein synthesis but also for the initiation of all mRNA translation through initiator tRNA(fMet) aminoacylation. The sequence is that of Methionine--tRNA ligase from Corynebacterium jeikeium (strain K411).